A 148-amino-acid chain; its full sequence is Large ribosomal subunit protein uL22 (148 aa).

This sequence belongs to the universal ribosomal protein uL22 family. Part of the 50S ribosomal subunit.

Its function is as follows. This protein binds specifically to 23S rRNA. It makes multiple contacts with different domains of the 23S rRNA in the assembled 50S subunit and ribosome. The globular domain of the protein is located near the polypeptide exit tunnel on the outside of the subunit, while an extended beta-hairpin is found that lines the wall of the exit tunnel in the center of the 70S ribosome. The chain is Large ribosomal subunit protein uL22 from Thermoplasma volcanium (strain ATCC 51530 / DSM 4299 / JCM 9571 / NBRC 15438 / GSS1).